The sequence spans 509 residues: L-arabinose isomerase (509 aa).

Mn(2+)-binding residues include glutamate 313, glutamate 340, histidine 357, and histidine 456.

It belongs to the arabinose isomerase family. It depends on Mn(2+) as a cofactor.

The catalysed reaction is beta-L-arabinopyranose = L-ribulose. It functions in the pathway carbohydrate degradation; L-arabinose degradation via L-ribulose; D-xylulose 5-phosphate from L-arabinose (bacterial route): step 1/3. In terms of biological role, catalyzes the conversion of L-arabinose to L-ribulose. The sequence is that of L-arabinose isomerase from Bacteroides thetaiotaomicron (strain ATCC 29148 / DSM 2079 / JCM 5827 / CCUG 10774 / NCTC 10582 / VPI-5482 / E50).